The primary structure comprises 364 residues: Homeobox protein Nkx-2.3 (364 aa).

Residues 132–153 form a disordered region; sequence GDCKAAEESERPKPRSRRKPRV. A compositionally biased stretch (basic and acidic residues) spans 135–144; it reads KAAEESERPK. The homeobox DNA-binding region spans 148 to 207; the sequence is RRKPRVLFSQAQVFELERRFKQQRYLSAPEREHLASSLKLTSTQVKIWFQNRRYKCKRQR.

Belongs to the NK-2 homeobox family.

The protein resides in the nucleus. Transcription factor. This chain is Homeobox protein Nkx-2.3 (NKX2-3), found in Homo sapiens (Human).